The chain runs to 474 residues: Glutamine synthetase (474 aa).

One can recognise a GS beta-grasp domain in the interval 15–99; sequence EDVQFIDVRF…MTFFIHDPIT (85 aa). One can recognise a GS catalytic domain in the interval 107–474; it reads PRNIAKKAET…PYEFTLYYDI (368 aa). Mg(2+) is bound by residues Glu132 and Glu134. An ATP-binding site is contributed by Glu210. The Mg(2+) site is built by Glu215 and Glu223. L-glutamate is bound by residues 267 to 268 and Gly268; that span reads NG. His272 serves as a coordination point for Mg(2+). Residues 274–276 and Ser276 contribute to the ATP site; that span reads HSS. L-glutamate is bound by residues Arg325, Glu331, and Arg343. ATP contacts are provided by Arg343, Arg348, and Lys357. Glu362 is a binding site for Mg(2+). Arg364 contacts L-glutamate. Position 402 is an O-AMP-tyrosine (Tyr402).

The protein belongs to the glutamine synthetase family. Oligomer of 12 subunits arranged in the form of two hexagons. The cofactor is Mg(2+).

It localises to the cytoplasm. The enzyme catalyses L-glutamate + NH4(+) + ATP = L-glutamine + ADP + phosphate + H(+). The activity of this enzyme could be controlled by adenylation under conditions of abundant glutamine. Catalyzes the ATP-dependent biosynthesis of glutamine from glutamate and ammonia. The polypeptide is Glutamine synthetase (Frankia alni).